A 379-amino-acid polypeptide reads, in one-letter code: Lipid-A-disaccharide synthase (379 aa).

Belongs to the LpxB family.

It catalyses the reaction a lipid X + a UDP-2-N,3-O-bis[(3R)-3-hydroxyacyl]-alpha-D-glucosamine = a lipid A disaccharide + UDP + H(+). The protein operates within bacterial outer membrane biogenesis; LPS lipid A biosynthesis. Functionally, condensation of UDP-2,3-diacylglucosamine and 2,3-diacylglucosamine-1-phosphate to form lipid A disaccharide, a precursor of lipid A, a phosphorylated glycolipid that anchors the lipopolysaccharide to the outer membrane of the cell. This is Lipid-A-disaccharide synthase from Vibrio cholerae serotype O1 (strain ATCC 39541 / Classical Ogawa 395 / O395).